The primary structure comprises 471 residues: T-box transcription factor T (471 aa).

A DNA-binding region (T-box) is located at residues 24-196; it reads LWTKFCSLTN…HNPFAKAFLD (173 aa).

In terms of tissue distribution, developing notochord.

It is found in the nucleus. Involved in the transcriptional regulation of genes required for mesoderm differentiation. This chain is T-box transcription factor T, found in Halocynthia roretzi (Sea squirt).